A 131-amino-acid chain; its full sequence is Protein NEGATIVE REGULATOR OF RESISTANCE (131 aa).

2 disordered regions span residues 1–33 (MDATTTDATTAKRKRPAASDIADDAPTTVDEVS) and 51–131 (TRRL…RAPA). Residues 12-15 (KRKR) carry the Nuclear localization signal motif. Positions 116–131 (PPSDAPATPRSARAPA) are enriched in low complexity.

It belongs to the NPR1-interactor family. Interacts with NPR1/NH1. Interacts with NPR2/NH2.

Its subcellular location is the nucleus. Acts as a negative regulator of disease resistance. Acts on basal resistance, age-related resistance and resistance mediated by the LRR receptor kinase XA21. Plants over-expressing NRR display enhanced susceptibility to the bacterial blight Xanthomonas oryzae pv. oryzae (Xoo). The chain is Protein NEGATIVE REGULATOR OF RESISTANCE from Oryza sativa subsp. indica (Rice).